The chain runs to 95 residues: Aspartyl/glutamyl-tRNA(Asn/Gln) amidotransferase subunit C (95 aa).

Belongs to the GatC family. In terms of assembly, heterotrimer of A, B and C subunits.

The enzyme catalyses L-glutamyl-tRNA(Gln) + L-glutamine + ATP + H2O = L-glutaminyl-tRNA(Gln) + L-glutamate + ADP + phosphate + H(+). The catalysed reaction is L-aspartyl-tRNA(Asn) + L-glutamine + ATP + H2O = L-asparaginyl-tRNA(Asn) + L-glutamate + ADP + phosphate + 2 H(+). Its function is as follows. Allows the formation of correctly charged Asn-tRNA(Asn) or Gln-tRNA(Gln) through the transamidation of misacylated Asp-tRNA(Asn) or Glu-tRNA(Gln) in organisms which lack either or both of asparaginyl-tRNA or glutaminyl-tRNA synthetases. The reaction takes place in the presence of glutamine and ATP through an activated phospho-Asp-tRNA(Asn) or phospho-Glu-tRNA(Gln). In Citrifermentans bemidjiense (strain ATCC BAA-1014 / DSM 16622 / JCM 12645 / Bem) (Geobacter bemidjiensis), this protein is Aspartyl/glutamyl-tRNA(Asn/Gln) amidotransferase subunit C.